A 411-amino-acid polypeptide reads, in one-letter code: Protrudin (411 aa).

Positions 1–27 (MQTSEREGSGPELSPSVMPEAPLESPP) are disordered. Topologically, residues 1 to 66 (MQTSEREGSG…AGDGVRYLLR (66 aa)) are cytoplasmic. Positions 1–92 (MQTSEREGSG…LFLTLNEGAW (92 aa)) are sufficient for homooligomerization. The segment at 1 to 205 (MQTSEREGSG…LYLLPLCWVL (205 aa)) is sufficient for localization to endoplasmic reticulum tubular network and for interactions with REEP1, REEP5, ATL1, ATL2, ATL3 and SPAST. The necessary for interaction with RAB11A and function in neurite outgrowth stretch occupies residues 51-64 (LEPLKDAGDGVRYL). Residues 67–87 (WQMPLCSLLTCLGLNVLFLTL) form a helical membrane-spanning segment. Position 88 (asparagine 88) is a topological domain, lumenal. The chain crosses the membrane as a helical span at residues 89–109 (EGAWYSVGALMISVPALLGYL). Residues 110–187 (QEVCRARLPE…NPVVSSQFYG (78 aa)) are Cytoplasmic-facing. An intramembrane region (helical) is located at residues 188 to 208 (ALLGTICMLYLLPLCWVLTLL). Residues 209–411 (NSTLFLGNVE…CASCNQTLSK (203 aa)) are Cytoplasmic-facing. Residues 234-286 (MNPKQEEHAFESPPPPDVGGKGGLMDSTPALTPTEDLTPGSVEEAEEAEPDEE) are disordered. The tract at residues 271-361 (TPGSVEEAEE…GCSATFSVLK (91 aa)) is necessary for interaction with KIF5A. The segment covering 276-286 (EEAEEAEPDEE) has biased composition (acidic residues). Residues 286–292 (EFKDAIE) are necessary for interaction with VAPA. The segment at 344 to 410 (TNNFGNCTGC…VCASCNQTLS (67 aa)) adopts an FYVE-type zinc-finger fold. Zn(2+) contacts are provided by cysteine 350, cysteine 353, cysteine 366, cysteine 369, cysteine 374, cysteine 377, cysteine 402, and cysteine 405.

As to quaternary structure, can form homooligomers (monomers, dimers and tetramers). Interacts with RAB11A (GDP-bound form); regulates RAB11A. Interacts with FKBP8; may negatively regulate ZFYVE27 phosphorylation. Interacts with VAPA (via MSP domain); may regulate ZFYVE27 retention in the endoplasmic reticulum and its function in cell projections formation. Interacts with VAPB (via MSP domain). Interacts with RAB11B (GDP-bound form), REEP1, REEP5, ATL1, ATL2, ATL3, SPAST, SURF4, KIF5A, KIF5B, KIF5C and RTN3. Phosphorylated. Phosphorylation is induced by NGF through the MAPK/ERK pathway and modulates interaction with RAB11A.

Its subcellular location is the recycling endosome membrane. It is found in the endoplasmic reticulum membrane. The protein localises to the cell projection. The protein resides in the growth cone membrane. Key regulator of RAB11-dependent vesicular trafficking during neurite extension through polarized membrane transport. Promotes axonal elongation and contributes to the establishment of neuronal cell polarity. Involved in nerve growth factor-induced neurite formation in VAPA-dependent manner. Contributes to both the formation and stabilization of the tubular ER network. Involved in ER morphogenesis by regulating the sheet-to-tubule balance and possibly the density of tubule interconnections. Acts as an adapter protein that facilitates the interaction of KIF5A with VAPA, VAPB, SURF4, RAB11A, RAB11B and RTN3 and the ZFYVE27-KIF5A complex contributes to the transport of these proteins in neurons. Can induce formation of neurite-like membrane protrusions in non-neuronal cells in a KIF5A/B-dependent manner. The protein is Protrudin (ZFYVE27) of Pongo abelii (Sumatran orangutan).